The sequence spans 1027 residues: Xyloglucanase (1027 aa).

The first 32 residues, 1–32, serve as a signal peptide directing secretion; sequence MKTFLGKKLWMASLAVALAAGSFAALPEMTSA. Asp70 serves as the catalytic Nucleophile. 4 BNR repeats span residues 134-143, 185-196, 252-262, and 357-367; these read RSTDRGDTWQ, WRSSDYGATWSK, YRSTDGGATWT, and FRSKDGGTTWT. Asp479 serves as the catalytic Proton donor. BNR repeat units follow at residues 537 to 545 and 717 to 727; these read SSDGGTNWY and FRSDDGGASWV. The 152-residue stretch at 876 to 1027 folds into the CBM3 domain; that stretch reads PEGSIRIEMY…SGTLQWGIEP (152 aa).

The protein belongs to the glycosyl hydrolase 74 family.

Hydrolyzes the glucosidic bonds of unbranched Glc residues in tamarind seed xyloglucan, producing XXXG, XLXG, XXLG and XLLG. May have a dual endo- and exo- mode of action towards xyloglucan, or may have an endo-processive mode of action. The chain is Xyloglucanase from Paenibacillus sp.